Consider the following 326-residue polypeptide: Dolichyl-phosphate beta-glucosyltransferase (326 aa).

Residues 1–7 lie on the Lumenal side of the membrane; sequence MWTCLCQ. A helical transmembrane segment spans residues 8–28; the sequence is LCFYLLSTLAVAALSIAALVL. The Cytoplasmic portion of the chain corresponds to 29–326; that stretch reads YKTKPYPNIK…RIASIQKKEK (298 aa).

This sequence belongs to the glycosyltransferase 2 family.

It localises to the endoplasmic reticulum membrane. The enzyme catalyses a di-trans,poly-cis-dolichyl phosphate + UDP-alpha-D-glucose = a di-trans,poly-cis-dolichyl beta-D-glucosyl phosphate + UDP. It functions in the pathway protein modification; protein glycosylation. In terms of biological role, required for normal production of N-glycosylated proteins in the endoplasmic reticulum (ER). Required for embryonic segmentation, dorsal-ventral patterning and gastrulation. Required for chitin orientation and shaping of the apical and lateral plasma membranes of epidermal cells during cuticle differentiation. Also required for correctly shaping apical membrane topology of the epithelia of other organs such as the midgut and the hindgut. The chain is Dolichyl-phosphate beta-glucosyltransferase (wol) from Drosophila melanogaster (Fruit fly).